Reading from the N-terminus, the 156-residue chain is Sperm acrosome-associated protein 5 (156 aa).

A signal peptide spans 1–18; sequence MQVSGTIVVILMAANVEA. Residues 19-147 form the C-type lysozyme domain; it reads KIYERCDLAK…SEWLRGCHMN (129 aa). 4 disulfides stabilise this stretch: Cys24/Cys144, Cys48/Cys132, Cys82/Cys97, and Cys93/Cys111. Glu53 is a catalytic residue.

Belongs to the glycosyl hydrolase 22 family.

The protein resides in the secreted. It catalyses the reaction Hydrolysis of (1-&gt;4)-beta-linkages between N-acetylmuramic acid and N-acetyl-D-glucosamine residues in a peptidoglycan and between N-acetyl-D-glucosamine residues in chitodextrins.. The chain is Sperm acrosome-associated protein 5 (SPACA5) from Bos taurus (Bovine).